The primary structure comprises 260 residues: Indole-3-glycerol phosphate synthase (260 aa).

Belongs to the TrpC family.

The catalysed reaction is 1-(2-carboxyphenylamino)-1-deoxy-D-ribulose 5-phosphate + H(+) = (1S,2R)-1-C-(indol-3-yl)glycerol 3-phosphate + CO2 + H2O. Its pathway is amino-acid biosynthesis; L-tryptophan biosynthesis; L-tryptophan from chorismate: step 4/5. This chain is Indole-3-glycerol phosphate synthase, found in Neisseria meningitidis serogroup C / serotype 2a (strain ATCC 700532 / DSM 15464 / FAM18).